The chain runs to 428 residues: AA14 family lytic polysaccharide monooxygenase A (428 aa).

The N-terminal stretch at 1-21 (MLRSLPASLALVAAFASKASA) is a signal peptide. Residues Asn34 and Asn52 are each glycosylated (N-linked (GlcNAc...) asparagine). Intrachain disulfides connect Cys88–Cys112, Cys131–Cys158, Cys174–Cys179, Cys181–Cys203, and Cys223–Cys239. Residue Asn155 is glycosylated (N-linked (GlcNAc...) asparagine). 2 disordered regions span residues 216–239 (KPAV…PGNC) and 292–428 (SSGT…HNAH). Residues 223–232 (CGADPDHGKP) show a composition bias toward basic and acidic residues. The N-linked (GlcNAc...) asparagine glycan is linked to Asn238. Positions 292–379 (SSGTGSSPTS…SVATEASSSP (88 aa)) are enriched in low complexity. A compositionally biased stretch (polar residues) spans 380 to 402 (IASTTVDEAVVSSSTVGSINPTR). The segment covering 414 to 428 (QKKKRKHARHLHNAH) has biased composition (basic residues).

Cu(2+) serves as cofactor.

The protein resides in the secreted. Functionally, lytic polysaccharide monooxygenase (LPMO) showing oxidase and peroxidase activities that are common for LPMOs. Catalysis by LPMOs requires the reduction of the active-site copper from Cu(II) to Cu(I) by a reducing agent and H(2)O(2) or O(2) as a cosubstrate. Shows no activity on cellulose-associated xylan or any other tested polysaccharide substrate, meaning that the substrate rremains unknown. This is AA14 family lytic polysaccharide monooxygenase A from Trametes coccinea (strain BRFM310) (Pycnoporus coccineus).